We begin with the raw amino-acid sequence, 2266 residues long: Protein ELYS (2266 aa).

Residues 1–494 (MRDLRAQVTS…SGVVHLTCTG (494 aa)) are seven-bladed beta propeller repeats. A necessary for cytoplasmic localization region spans residues 1–981 (MRDLRAQVTS…QTLKINVMND (981 aa)). Ser509, Ser528, Ser1080, Ser1138, Ser1142, Ser1150, Ser1153, Ser1155, and Ser1160 each carry phosphoserine. Residues 591–1092 (VVLTKEEFDR…IEEPSPIVYS (502 aa)) form an important for nuclear localization region. The interval 1019 to 2266 (YHLSTSSVFR…PKQILRRKML (1248 aa)) is disordered. Residues 1149–2266 (RSLPSSSQLK…PKQILRRKML (1118 aa)) are necessary for nuclear localization. At Thr1175 the chain carries Phosphothreonine. Ser1214, Ser1218, Ser1222, Ser1232, and Ser1250 each carry phosphoserine. Thr1257 is subject to Phosphothreonine. A phosphoserine mark is found at Ser1283 and Ser1297. 2 stretches are compositionally biased toward polar residues: residues 1305 to 1320 (KGNS…TTLE) and 1335 to 1353 (FTAS…NVTE). The residue at position 1369 (Thr1369) is a Phosphothreonine. A phosphoserine mark is found at Ser1371 and Ser1513. Residues 1446–1698 (RANDNKSMAD…MEQSIHETIP (253 aa)) form a mediates transcriptional activity region. Residue Thr1517 is modified to Phosphothreonine. Phosphoserine is present on residues Ser1533, Ser1541, Ser1729, and Ser1806. Composition is skewed to polar residues over residues 1796–1808 (LSQN…NSVT) and 1822–1838 (ILEN…ITTG). At Thr1808 the chain carries Phosphothreonine. Residues 1842–2266 (KRLKSSQLLE…PKQILRRKML (425 aa)) form an important for nuclear localization and chromatin binding region. Phosphoserine occurs at positions 1878, 1884, and 1898. Residues 1908-1919 (STNLDASENTGN) are compositionally biased toward polar residues. Composition is skewed to basic and acidic residues over residues 1920–1930 (KQDDKSSDKQL) and 1940–1952 (GREV…REDS). Phosphoserine occurs at positions 1944 and 1946. A DNA-binding region (a.T hook) is located at residues 1971–1983 (PRKRGRPRKINPS). Positions 1986 to 2004 (VGSKAVKEERSPKKKEAPS) are enriched in basic and acidic residues. A phosphoserine mark is found at Ser1996, Ser2043, Ser2044, and Ser2060. Positions 2064–2084 (VSEERTDEMTHKETNEQEERL) are enriched in basic and acidic residues. Phosphoserine is present on residues Ser2089, Ser2120, Ser2123, and Ser2154. Over residues 2169 to 2179 (NKLEDELKDDA) the composition is skewed to basic and acidic residues. A compositionally biased stretch (basic residues) spans 2188–2197 (PKAKRIRTSK). Phosphoserine occurs at positions 2212, 2222, and 2226.

It belongs to the ELYS family. As to quaternary structure, associates with the Nup107-160 subcomplex of the NPC.

The protein localises to the cytoplasm. Its subcellular location is the nucleus. It localises to the nucleus envelope. The protein resides in the nucleus matrix. It is found in the chromosome. The protein localises to the centromere. Its subcellular location is the kinetochore. It localises to the nucleoplasm. The protein resides in the nuclear pore complex. Its function is as follows. Required for the assembly of a functional nuclear pore complex (NPC) on the surface of chromosomes as nuclei form at the end of mitosis. May initiate NPC assembly by binding to chromatin and recruiting the Nup107-160 subcomplex of the NPC. Also required for the localization of the Nup107-160 subcomplex of the NPC to the kinetochore during mitosis and for the completion of cytokinesis. This is Protein ELYS (AHCTF1) from Homo sapiens (Human).